Consider the following 507-residue polypeptide: Maturase K (507 aa).

This sequence belongs to the intron maturase 2 family. MatK subfamily.

Its subcellular location is the plastid. The protein localises to the chloroplast. Its function is as follows. Usually encoded in the trnK tRNA gene intron. Probably assists in splicing its own and other chloroplast group II introns. The chain is Maturase K from Robinia pseudoacacia (Black locust).